We begin with the raw amino-acid sequence, 285 residues long: HTH-type transcriptional regulator MurR (285 aa).

One can recognise an HTH rpiR-type domain in the interval 1–77 (MLYLTKIRNA…MALIGEYSAS (77 aa)). The H-T-H motif DNA-binding region spans 37-56 (SRKMAKQLGISQSSIVKFAQ). One can recognise an SIS domain in the interval 128-268 (IIEVISKAPF…FVGLVQLNDV (141 aa)).

In terms of assembly, homotetramer.

It participates in amino-sugar metabolism; N-acetylmuramate degradation [regulation]. Functionally, represses the expression of the murPQ operon involved in the uptake and degradation of N-acetylmuramic acid (MurNAc). Binds to two adjacent inverted repeats within the operator region. MurNAc 6-phosphate, the substrate of MurQ, is the specific inducer that weakens binding of MurR to the operator. This chain is HTH-type transcriptional regulator MurR, found in Escherichia coli O7:K1 (strain IAI39 / ExPEC).